A 458-amino-acid chain; its full sequence is MKPSQPLCNRIVDQLITAMIQNRPFDAVLASSTVAKPWTQQLVSDVLHSIPRFFFISPRSIGRQKGFRHRSPLKQRNLSDESQRRRSEVLVLGPGAYMDPKKVSIGLQKALEFFFWIETHFGFDHNEITCRDMACLLAKGNDFKGLWDFLRQVSRRENGKNVVTTASITCLMKCLGEEGFVKEALATFYRMKEYHCKPDVYAYNTIINALCRVGNFKKARFLLDQMQLPGFRYPPDTYTYTILISSYCRYGMQTGCRKAIRRRMWEANRMFREMLFRGFVPDVVTYNCLIDGCCKTNRIGRALELFEDMKTKGCVPNQVTYNSFIRYYSVTNEIEGAIEMMRTMKKLGHGVPGSSTYTPLIHALVETRRAAEARDLVVEMVEAGLVPREYTYKLVCDALSSEGLASTLDEELHKRMREGIQQRYSRVMKIKPTMARKEVVRKYFHKIDGNQNFAMEEI.

PPR repeat units follow at residues 164 to 198 (TTAS…HCKP), 199 to 233 (DVYA…GFRY), 236 to 271 (DTYT…NRMF), 282 to 316 (DVVT…GCVP), 317 to 351 (NQVT…GHGV), 353 to 387 (GSST…GLVP), and 388 to 419 (REYT…MREG).

Belongs to the PPR family. P subfamily.

In Arabidopsis thaliana (Mouse-ear cress), this protein is Pentatricopeptide repeat-containing protein At1g77405.